Consider the following 273-residue polypeptide: Putative pyruvate, phosphate dikinase regulatory protein (273 aa).

Gly-149–Thr-156 contributes to the ADP binding site.

It belongs to the pyruvate, phosphate/water dikinase regulatory protein family. PDRP subfamily.

The enzyme catalyses N(tele)-phospho-L-histidyl/L-threonyl-[pyruvate, phosphate dikinase] + ADP = N(tele)-phospho-L-histidyl/O-phospho-L-threonyl-[pyruvate, phosphate dikinase] + AMP + H(+). The catalysed reaction is N(tele)-phospho-L-histidyl/O-phospho-L-threonyl-[pyruvate, phosphate dikinase] + phosphate + H(+) = N(tele)-phospho-L-histidyl/L-threonyl-[pyruvate, phosphate dikinase] + diphosphate. Functionally, bifunctional serine/threonine kinase and phosphorylase involved in the regulation of the pyruvate, phosphate dikinase (PPDK) by catalyzing its phosphorylation/dephosphorylation. The chain is Putative pyruvate, phosphate dikinase regulatory protein from Rickettsia felis (strain ATCC VR-1525 / URRWXCal2) (Rickettsia azadi).